Reading from the N-terminus, the 89-residue chain is Small ribosomal subunit protein uS15 (89 aa).

Belongs to the universal ribosomal protein uS15 family. Part of the 30S ribosomal subunit. Forms a bridge to the 50S subunit in the 70S ribosome, contacting the 23S rRNA.

In terms of biological role, one of the primary rRNA binding proteins, it binds directly to 16S rRNA where it helps nucleate assembly of the platform of the 30S subunit by binding and bridging several RNA helices of the 16S rRNA. Functionally, forms an intersubunit bridge (bridge B4) with the 23S rRNA of the 50S subunit in the ribosome. This chain is Small ribosomal subunit protein uS15, found in Anoxybacillus flavithermus (strain DSM 21510 / WK1).